A 150-amino-acid chain; its full sequence is Nucleoside diphosphate kinase (150 aa).

ATP-binding residues include Lys-9, Phe-57, Arg-85, Thr-91, Arg-102, and Asn-112. Residue His-115 is the Pros-phosphohistidine intermediate of the active site.

This sequence belongs to the NDK family. Homotetramer. Mg(2+) serves as cofactor.

It is found in the cytoplasm. It carries out the reaction a 2'-deoxyribonucleoside 5'-diphosphate + ATP = a 2'-deoxyribonucleoside 5'-triphosphate + ADP. The catalysed reaction is a ribonucleoside 5'-diphosphate + ATP = a ribonucleoside 5'-triphosphate + ADP. Its function is as follows. Major role in the synthesis of nucleoside triphosphates other than ATP. The ATP gamma phosphate is transferred to the NDP beta phosphate via a ping-pong mechanism, using a phosphorylated active-site intermediate. In Staphylococcus carnosus (strain TM300), this protein is Nucleoside diphosphate kinase.